The chain runs to 237 residues: Class B acid phosphatase (237 aa).

The N-terminal stretch at 1 to 23 (MRKVTLTLSAIALALSLNGAAMA) is a signal peptide. The Nucleophile role is filled by Asp-69. Positions 69 and 71 each coordinate Mg(2+). Catalysis depends on Asp-71, which acts as the Proton donor. Residues 137–138 (TG) and Lys-177 contribute to the substrate site. A Mg(2+)-binding site is contributed by Asp-192.

The protein belongs to the class B bacterial acid phosphatase family. As to quaternary structure, homotetramer. Requires Mg(2+) as cofactor.

It localises to the periplasm. The catalysed reaction is a phosphate monoester + H2O = an alcohol + phosphate. In terms of biological role, dephosphorylates several organic phosphate monoesters. Also has a phosphotransferase activity catalyzing the transfer of low-energy phosphate groups from organic phosphate monoesters to free hydroxyl groups of various organic compounds. The protein is Class B acid phosphatase of Proteus mirabilis (strain HI4320).